Reading from the N-terminus, the 307-residue chain is Aspartate carbamoyltransferase catalytic subunit (307 aa).

Carbamoyl phosphate contacts are provided by Arg-54 and Thr-55. Lys-83 lines the L-aspartate pocket. Residues Arg-104, His-132, and Gln-135 each contribute to the carbamoyl phosphate site. Arg-165 and Arg-228 together coordinate L-aspartate. 2 residues coordinate carbamoyl phosphate: Leu-267 and Pro-268.

This sequence belongs to the aspartate/ornithine carbamoyltransferase superfamily. ATCase family. Heterododecamer (2C3:3R2) of six catalytic PyrB chains organized as two trimers (C3), and six regulatory PyrI chains organized as three dimers (R2).

The enzyme catalyses carbamoyl phosphate + L-aspartate = N-carbamoyl-L-aspartate + phosphate + H(+). Its pathway is pyrimidine metabolism; UMP biosynthesis via de novo pathway; (S)-dihydroorotate from bicarbonate: step 2/3. Its function is as follows. Catalyzes the condensation of carbamoyl phosphate and aspartate to form carbamoyl aspartate and inorganic phosphate, the committed step in the de novo pyrimidine nucleotide biosynthesis pathway. This is Aspartate carbamoyltransferase catalytic subunit from Clostridium botulinum (strain Loch Maree / Type A3).